A 121-amino-acid polypeptide reads, in one-letter code: Phospholipase A2 homolog ECO_00035 (121 aa).

Cystine bridges form between Cys25-Cys114, Cys27-Cys43, Cys42-Cys94, Cys48-Cys121, Cys49-Cys87, Cys56-Cys80, and Cys74-Cys85. Residues 104–116 form an important for membrane-damaging activities in eukaryotes and bacteria; heparin-binding region; the sequence is KKYKIYPNILCRG.

It belongs to the phospholipase A2 family. Group II subfamily. S49 sub-subfamily. Monomer. Expressed by the venom gland.

The protein resides in the secreted. Its function is as follows. Snake venom phospholipase A2 homolog that lacks enzymatic activity. Shows high myotoxin activities and displays edema-inducing activities. Has cytotoxic activities against HUVEC cells (LC(50)=4.9 uL) and human lung adenocarcinoma A549 cells (LC(50)=3.5 uL). This is Phospholipase A2 homolog ECO_00035 from Echis coloratus (Carpet viper).